The following is a 586-amino-acid chain: Proton channel OTOP1 (586 aa).

Over 1-52 (MVEHGGTDSMWLNKYNPAAASSASSSSSSDAENKLFSRLKVSLTKKYPQKNA) the chain is Cytoplasmic. A helical transmembrane segment spans residues 53-74 (ELLSAQYGTNLLLLGVSVMLAL). Residues 75-82 (AAQSGPVK) are Extracellular-facing. A helical transmembrane segment spans residues 83–106 (EEHLLSFITVLMLVQLVWMLCYMI). At 107–124 (RRERERSPVPERDAHAGA) the chain is on the cytoplasmic side. A helical transmembrane segment spans residues 125-147 (SWIRGGLTMLALLSLIMDAFRIG). At 148-157 (YFVGYHSCIS) the chain is on the extracellular side. Residues 158–182 (AALGVYPIVHALHTISQVHFLWFHI) traverse the membrane as a helical segment. The Cytoplasmic portion of the chain corresponds to 183-190 (KDVIKKYE). The helical transmembrane segment at 191 to 217 (TFERFGVIHAVFTNLLLWCNGVMSETE) threads the bilayer. Over 218–255 (HFMHNHRRRLIEMGYANLSTVDVQPHCNCTTSVCSMFS) the chain is Extracellular. A helical membrane pass occupies residues 256 to 281 (TSLYYLYPFNIEYHIFVSAMLFVMWK). Topologically, residues 282–303 (NIGRTLDRHSNRKRRSTGSTGL) are cytoplasmic. Residues 304 to 326 (LLGPLGGLVALASSVSVLVVYLI) traverse the membrane as a helical segment. Topologically, residues 327–336 (HLEKTEEMHE) are extracellular. The helical transmembrane segment at 337-362 (AAVSMFYYYGVAMMACMCVGSGTGLL) threads the bilayer. The Cytoplasmic portion of the chain corresponds to 363 to 380 (VYRMENRPMDTGSNPART). A helical membrane pass occupies residues 381-405 (LDTELLLASSLGSWLMSWCSVVASV). The Extracellular portion of the chain corresponds to 406 to 417 (AEAGQKSPSFSW). Residues 418 to 438 (TSLTYSLLLVLEKCIQNLFIV) traverse the membrane as a helical segment. The Cytoplasmic portion of the chain corresponds to 439–518 (ESLYRRHSEE…TPGRKRQILK (80 aa)). Residues 484–505 (PAAGSHALSRKQPDAPLPAGQR) are disordered. The chain crosses the membrane as a helical span at residues 519–537 (NICMFLFMCNISLWILPAF). The Extracellular portion of the chain corresponds to 538-555 (GCRPQYDNPLENETFGTS). The helical transmembrane segment at 556–579 (VWTTVLNVAIPLNLFYRMHSVASL) threads the bilayer. The Cytoplasmic segment spans residues 580-586 (FEVFRKV).

This sequence belongs to the otopetrin family. As to quaternary structure, homodimer.

The protein resides in the cell membrane. Its subcellular location is the cell projection. It localises to the microvillus. It catalyses the reaction H(+)(in) = H(+)(out). Its activity is regulated as follows. Activated by both acid and alkali, with proton influx in response to extracellular acid and proton efflux during alkali stimulation. Inhibited by Zn(2+); this inhibition is thought to be pH-sensitive. Currents evoked in response to mild acid (pH 6.0) stimulus may also be mildly potentiated by exposure to Zn(2+). Activated by NH(4)Cl. Functionally, proton-selective ion channel. Biphasically modulated by acid and alkali, mediating proton influx and efflux in response to extracellular acid and base stimulation, respectively. May be involved in acid and base perception. Sensor for ammonium chloride (NH(4)Cl) in taste receptor cells. NH(4)Cl acts by increasing the intracellular pH, thereby generating a driving force for proton entry through OTOP1 channel. Plays a role in the regulation of Ca(2+) flux in response to purigenic (ATP, ADP and UDP) stimuli, leading to increase in cytosolic Ca(2+) due to influx of extracellular calcium. May play this role by inhibiting P2Y purinoceptor-mediated Ca(2+) release in a Ca(2+)-dependent manner and promote an influx of Ca(2+) in response to ATP. Through this mechanism and possibly others, plays a role in the formation and function of calcium carbonate-based structures in the vestibular system of the inner ear, called otoconia, that sense gravity and linear acceleration. The protein is Proton channel OTOP1 of Danio rerio (Zebrafish).